A 440-amino-acid chain; its full sequence is Transposon Ty1-GR2 Gag polyprotein (440 aa).

Residues 1–16 (MESQQLSQHSHISHGS) show a composition bias toward low complexity. 3 disordered regions span residues 1 to 93 (MESQ…MMTQ), 126 to 173 (PQSQ…RPPP), and 352 to 440 (GSRN…PGTY). Composition is skewed to polar residues over residues 48-60 (TKAN…TPAS) and 127-152 (QSQF…GNTF). Positions 153–165 (TDSSSADSDMTST) are enriched in low complexity. An RNA-binding region spans residues 299 to 401 (NNGIHINNKV…NSKSKTARAH (103 aa)). Over residues 402–418 (NVSTSNNSPSTDNDSIS) the composition is skewed to low complexity. The residue at position 416 (serine 416) is a Phosphoserine. The span at 419–428 (KSTTEPIQLN) shows a compositional bias: polar residues. Basic and acidic residues predominate over residues 429–440 (NKHDLHLRPGTY).

As to quaternary structure, homotrimer.

Its subcellular location is the cytoplasm. In terms of biological role, capsid protein (CA) is the structural component of the virus-like particle (VLP), forming the shell that encapsulates the retrotransposons dimeric RNA genome. The particles are assembled from trimer-clustered units and there are holes in the capsid shells that allow for the diffusion of macromolecules. CA also has nucleocapsid-like chaperone activity, promoting primer tRNA(i)-Met annealing to the multipartite primer-binding site (PBS), dimerization of Ty1 RNA and initiation of reverse transcription. This Saccharomyces cerevisiae (strain ATCC 204508 / S288c) (Baker's yeast) protein is Transposon Ty1-GR2 Gag polyprotein (TY1A-GR2).